The chain runs to 332 residues: Ornithine carbamoyltransferase 1, catabolic (332 aa).

Carbamoyl phosphate-binding positions include 56–59 (STRT), Q83, R107, and 134–137 (HPTQ). L-ornithine is bound by residues N167, D231, and 235–236 (SM). Carbamoyl phosphate-binding positions include 273-274 (CL) and R318.

Belongs to the aspartate/ornithine carbamoyltransferase superfamily. OTCase family.

The protein localises to the cytoplasm. It catalyses the reaction carbamoyl phosphate + L-ornithine = L-citrulline + phosphate + H(+). The protein operates within amino-acid degradation; L-arginine degradation via ADI pathway; carbamoyl phosphate from L-arginine: step 2/2. Functionally, reversibly catalyzes the transfer of the carbamoyl group from carbamoyl phosphate (CP) to the N(epsilon) atom of ornithine (ORN) to produce L-citrulline. In Streptococcus agalactiae serotype III (strain NEM316), this protein is Ornithine carbamoyltransferase 1, catabolic (arcB1).